We begin with the raw amino-acid sequence, 260 residues long: Uroplakin-1b (260 aa).

At 2–15 (AKDDSTVRCFQGLL) the chain is on the cytoplasmic side. Residues 16 to 36 (IFGNVIIGMCSIALMAECIFF) form a helical membrane-spanning segment. At 37–60 (VSDQNSLYPLLEATNNDDIYAAAW) the chain is on the extracellular side. Residues 61 to 81 (IGMFVGICLFCLSVLGIVGIM) form a helical membrane-spanning segment. Topologically, residues 82-86 (KSNRK) are cytoplasmic. A helical transmembrane segment spans residues 87–107 (ILLVYFILMFIVYAFEVASCI). The Extracellular segment spans residues 108–229 (TAATQRDFFT…ELISGPMNRH (122 aa)). The helical transmembrane segment at 230–250 (AWGVAWFGFAILCWTFWVLLG) threads the bilayer. Residues 251–260 (TMFYWSRIDY) lie on the Cytoplasmic side of the membrane.

This sequence belongs to the tetraspanin (TM4SF) family. In terms of assembly, heterodimer with uroplakin-3A (UPK3A) or uroplakin-3B (UPK3B). Post-translationally, N-glycosylated with high-mannose oligosaccharides. Bladder epithelium.

The protein resides in the membrane. Component of the asymmetric unit membrane (AUM); a highly specialized biomembrane elaborated by terminally differentiated urothelial cells. May play an important role in normal bladder epithelial physiology, possibly in regulating membrane permeability of superficial umbrella cells or in stabilizing the apical membrane through AUM/cytoskeletal interactions. The chain is Uroplakin-1b (UPK1B) from Bos taurus (Bovine).